A 916-amino-acid chain; its full sequence is Isoleucine--tRNA ligase (916 aa).

A 'HIGH' region motif is present at residues 57-67 (PYANGNLHMGH). Position 554 (Glu554) interacts with L-isoleucyl-5'-AMP. A 'KMSKS' region motif is present at residues 595–599 (KMSKS). Lys598 lines the ATP pocket. Zn(2+) is bound by residues Cys885, Cys888, Cys905, and Cys908.

The protein belongs to the class-I aminoacyl-tRNA synthetase family. IleS type 1 subfamily. In terms of assembly, monomer. It depends on Zn(2+) as a cofactor.

Its subcellular location is the cytoplasm. It carries out the reaction tRNA(Ile) + L-isoleucine + ATP = L-isoleucyl-tRNA(Ile) + AMP + diphosphate. Catalyzes the attachment of isoleucine to tRNA(Ile). As IleRS can inadvertently accommodate and process structurally similar amino acids such as valine, to avoid such errors it has two additional distinct tRNA(Ile)-dependent editing activities. One activity is designated as 'pretransfer' editing and involves the hydrolysis of activated Val-AMP. The other activity is designated 'posttransfer' editing and involves deacylation of mischarged Val-tRNA(Ile). This Staphylococcus epidermidis (strain ATCC 12228 / FDA PCI 1200) protein is Isoleucine--tRNA ligase.